Reading from the N-terminus, the 453-residue chain is Putative sodium-coupled neutral amino acid transporter 11 (453 aa).

The interval 1 to 34 is disordered; that stretch reads MSYQQPQLRGPLQRETDPSDRESLVSGHEHGGKS. Over residues 12-32 the composition is skewed to basic and acidic residues; it reads LQRETDPSDRESLVSGHEHGG. Transmembrane regions (helical) follow at residues 39-59, 66-86, 106-126, 152-172, 179-199, 222-242, 262-282, 299-319, 337-357, 359-379, and 399-419; these read AVFN…PYSM, LGIL…VLLI, GFPG…IAMI, FISR…PLSL, LGKI…VVVT, AIQA…CFLV, ILVS…TFTG, VTFG…IECF, VFHV…SLLI, CLGI…IFII, and MACV…VMAI.

Belongs to the amino acid/polyamine transporter 2 family. Widely expressed.

The protein localises to the membrane. Putative sodium-dependent amino acid/proton antiporter. The chain is Putative sodium-coupled neutral amino acid transporter 11 (Slc38a11) from Rattus norvegicus (Rat).